Reading from the N-terminus, the 286-residue chain is uncharacterized protein (286 aa).

One can recognise an Integrase catalytic domain in the interval 1–146 (MSRYKKDNDG…KPVDVERGDF (146 aa)). Residues 252–263 (RKVKAKKGKKDK) show a composition bias toward basic residues. Residues 252–286 (RKVKAKKGKKDKKLKESKKSDDTSTGASTGSSIAM) form a disordered region. Residues 264-273 (KLKESKKSDD) are compositionally biased toward basic and acidic residues. Low complexity predominate over residues 274 to 286 (TSTGASTGSSIAM).

This is an uncharacterized protein from Caenorhabditis elegans.